Reading from the N-terminus, the 1588-residue chain is Multicopy suppressor of chk1 protein 1 (1588 aa).

Residues 38 to 60 (HAKPSTQQQQQQQNISNETTSTG) form a disordered region. The segment covering 51–60 (NISNETTSTG) has biased composition (polar residues). The JmjN domain occupies 82 to 124 (NVRVTPKKEEFSRGLDFISDLYDQTARKSGAVRVIPPDNWKCP). Residues 298–345 (KCKLCAQEGSSLVTCCICQSNYHYACVEAPFAPFSDIHYWTCNSCIPS) form a PHD-type 1 zinc finger. Over residues 385 to 395 (PLTLPSNTKTP) the composition is skewed to polar residues. The disordered stretch occupies residues 385–412 (PLTLPSNTKTPPASARQSSRRTRSTSGK). Residues 475–645 (FPTSRQNAYY…DMHAENSFNM (171 aa)) form the JmjC domain. Positions 848-872 (EKRKPKRGSATHSHLESPSEEVEDL) are disordered. A PHD-type 2 zinc finger spans residues 1171–1220 (FHYCFCRQPEAGMMIECELCHEWYHAKCMKMSKKKLRADEKFICPICDYR). Positions 1319-1341 (APQPPPFIGESRSNRKPRPTKRQ) are disordered. The segment at 1454–1505 (SVICLCRQPFAISDGTVQCHNCLEWFHYECVGLSSDIVSTLSNYACPDCCSK) adopts a PHD-type 3 zinc-finger fold.

The protein resides in the nucleus. Its function is as follows. Has a role in regulating chromatin structure via global deacetylation of histone H3. This function is associated with the activity of a histone deacetylase. The polypeptide is Multicopy suppressor of chk1 protein 1 (msc1) (Schizosaccharomyces pombe (strain 972 / ATCC 24843) (Fission yeast)).